The sequence spans 409 residues: Rho-GTPase-activating protein BAG7 (409 aa).

The span at 1-26 (MFNMNLLSTPSSEEGSPQNRSSSMSS) shows a compositional bias: polar residues. The tract at residues 1-32 (MFNMNLLSTPSSEEGSPQNRSSSMSSVEGKKD) is disordered. The region spanning 50–257 (VSLEESLKVA…FLILHASDII (208 aa)) is the Rho-GAP domain. The tract at residues 362-409 (KLLGNVGNSSNTGIKDPTERVPRGEHKTKHKQRQSWLRRLTSPSRTQP) is disordered. Over residues 377–386 (DPTERVPRGE) the composition is skewed to basic and acidic residues.

In terms of assembly, interacts with RHO1.

Its function is as follows. Acts in signal transduction. Activates RHO1. The sequence is that of Rho-GTPase-activating protein BAG7 (BAG7) from Saccharomyces cerevisiae (strain ATCC 204508 / S288c) (Baker's yeast).